The primary structure comprises 49 residues: Large ribosomal subunit protein bL33 (49 aa).

The protein belongs to the bacterial ribosomal protein bL33 family.

This is Large ribosomal subunit protein bL33 from Nitratidesulfovibrio vulgaris (strain ATCC 29579 / DSM 644 / CCUG 34227 / NCIMB 8303 / VKM B-1760 / Hildenborough) (Desulfovibrio vulgaris).